The primary structure comprises 434 residues: Phosphomethylpyrimidine synthase 2 (434 aa).

Residues methionine 94, tyrosine 123, histidine 162, 184-186, 225-228, and glutamate 264 contribute to the substrate site; these read SRG and NAMR. A Zn(2+)-binding site is contributed by histidine 268. Tyrosine 291 is a binding site for substrate. Residue histidine 332 coordinates Zn(2+). [4Fe-4S] cluster is bound by residues cysteine 408, cysteine 411, and cysteine 415.

The protein belongs to the ThiC family. It depends on [4Fe-4S] cluster as a cofactor.

The enzyme catalyses 5-amino-1-(5-phospho-beta-D-ribosyl)imidazole + S-adenosyl-L-methionine = 4-amino-2-methyl-5-(phosphooxymethyl)pyrimidine + CO + 5'-deoxyadenosine + formate + L-methionine + 3 H(+). It functions in the pathway cofactor biosynthesis; thiamine diphosphate biosynthesis. In terms of biological role, catalyzes the synthesis of the hydroxymethylpyrimidine phosphate (HMP-P) moiety of thiamine from aminoimidazole ribotide (AIR) in a radical S-adenosyl-L-methionine (SAM)-dependent reaction. The polypeptide is Phosphomethylpyrimidine synthase 2 (Methanosphaera stadtmanae (strain ATCC 43021 / DSM 3091 / JCM 11832 / MCB-3)).